We begin with the raw amino-acid sequence, 91 residues long: N(2)-fixation sustaining protein CowN (91 aa).

The protein belongs to the CowN family.

In terms of biological role, is required to sustain N(2)-dependent growth in the presence of low levels of carbon monoxide (CO). Probably acts by protecting the N(2) fixation ability of the nitrogenase complex, which is inactivated in the presence of CO. The protein is N(2)-fixation sustaining protein CowN of Gluconacetobacter diazotrophicus (strain ATCC 49037 / DSM 5601 / CCUG 37298 / CIP 103539 / LMG 7603 / PAl5).